Reading from the N-terminus, the 228-residue chain is UPF0758 protein SAB1521c (228 aa).

The region spanning 102-224 (KITQPSDVAD…FTSLVEAGYF (123 aa)) is the MPN domain. Zn(2+)-binding residues include His-173, His-175, and Asp-186. The JAMM motif motif lies at 173–186 (HNHPSGDVTPSQED).

Belongs to the UPF0758 family.

In Staphylococcus aureus (strain bovine RF122 / ET3-1), this protein is UPF0758 protein SAB1521c.